The primary structure comprises 348 residues: NADH-ubiquinone oxidoreductase chain 2 (348 aa).

The next 9 helical transmembrane spans lie at 1–21 (MSPY…TITA), 60–80 (FLTQ…NAWL), 96–116 (TLII…TWLP), 149–169 (NPTL…WGGL), 177–194 (ILAY…LILQ), 198–220 (TLTL…TFIL), 238–258 (ILTS…PLTG), 273–293 (DLAP…YFYL), and 328–348 (MAAS…LFNI).

The protein belongs to the complex I subunit 2 family.

It localises to the mitochondrion inner membrane. The catalysed reaction is a ubiquinone + NADH + 5 H(+)(in) = a ubiquinol + NAD(+) + 4 H(+)(out). Core subunit of the mitochondrial membrane respiratory chain NADH dehydrogenase (Complex I) that is believed to belong to the minimal assembly required for catalysis. Complex I functions in the transfer of electrons from NADH to the respiratory chain. The immediate electron acceptor for the enzyme is believed to be ubiquinone. The polypeptide is NADH-ubiquinone oxidoreductase chain 2 (MT-ND2) (Tetraodon nigroviridis (Spotted green pufferfish)).